The following is a 167-amino-acid chain: Leptin (167 aa).

The N-terminal stretch at 1–21 is a signal peptide; that stretch reads MLCGPLCRFLWLWPYLSYVEA. A disulfide bridge connects residues cysteine 117 and cysteine 167.

It belongs to the leptin family.

The protein localises to the secreted. In terms of biological role, key player in the regulation of energy balance and body weight control. Once released into the circulation, has central and peripheral effects by binding LEPR, found in many tissues, which results in the activation of several major signaling pathways. In the hypothalamus, acts as an appetite-regulating factor that induces a decrease in food intake and an increase in energy consumption by inducing anorexinogenic factors and suppressing orexigenic neuropeptides, also regulates bone mass and secretion of hypothalamo-pituitary-adrenal hormones. In the periphery, increases basal metabolism, influences reproductive function, regulates pancreatic beta-cell function and insulin secretion, is pro-angiogenic for endothelial cell and affects innate and adaptive immunity. In the arcuate nucleus of the hypothalamus, activates by depolarization POMC neurons inducing FOS and SOCS3 expression to release anorexigenic peptides and inhibits by hyperpolarization NPY neurons inducing SOCS3 with a consequent reduction on release of orexigenic peptides. In addition to its known satiety inducing effect, has a modulatory role in nutrient absorption. In the intestine, reduces glucose absorption by enterocytes by activating PKC and leading to a sequential activation of p38, PI3K and ERK signaling pathways which exerts an inhibitory effect on glucose absorption. Acts as a growth factor on certain tissues, through the activation of different signaling pathways increases expression of genes involved in cell cycle regulation such as CCND1, via JAK2-STAT3 pathway, or VEGFA, via MAPK1/3 and PI3K-AKT1 pathways. May also play an apoptotic role via JAK2-STAT3 pathway and up-regulation of BIRC5 expression. Pro-angiogenic, has mitogenic activity on vascular endothelial cells and plays a role in matrix remodeling by regulating the expression of matrix metalloproteinases (MMPs) and tissue inhibitors of metalloproteinases (TIMPs). In innate immunity, modulates the activity and function of neutrophils by increasing chemotaxis and the secretion of oxygen radicals. Increases phagocytosis by macrophages and enhances secretion of pro-inflammatory mediators. Increases cytotoxic ability of NK cells. Plays a pro-inflammatory role, in synergy with IL1B, by inducing NOS2 which promotes the production of IL6, IL8 and Prostaglandin E2, through a signaling pathway that involves JAK2, PI3K, MAP2K1/MEK1 and MAPK14/p38. In adaptive immunity, promotes the switch of memory T-cells towards T helper-1 cell immune responses. Increases CD4(+)CD25(-) T-cell proliferation and reduces autophagy during TCR (T-cell receptor) stimulation, through MTOR signaling pathway activation and BCL2 up-regulation. The protein is Leptin (LEP) of Felis catus (Cat).